Consider the following 88-residue polypeptide: Translation initiation factor IF-1 3 (88 aa).

In terms of domain architecture, S1-like spans 1 to 72; sequence MAKEELLELD…TKGCINFRHK (72 aa).

It belongs to the IF-1 family. In terms of assembly, component of the 30S ribosomal translation pre-initiation complex which assembles on the 30S ribosome in the order IF-2 and IF-3, IF-1 and N-formylmethionyl-tRNA(fMet); mRNA recruitment can occur at any time during PIC assembly.

It is found in the cytoplasm. Its function is as follows. One of the essential components for the initiation of protein synthesis. Stabilizes the binding of IF-2 and IF-3 on the 30S subunit to which N-formylmethionyl-tRNA(fMet) subsequently binds. Helps modulate mRNA selection, yielding the 30S pre-initiation complex (PIC). Upon addition of the 50S ribosomal subunit IF-1, IF-2 and IF-3 are released leaving the mature 70S translation initiation complex. This Burkholderia orbicola (strain AU 1054) protein is Translation initiation factor IF-1 3.